The chain runs to 522 residues: Sugar carrier protein A (522 aa).

Topologically, residues 1-22 (MAGGSLAPAGVAKERAEQYQGK) are cytoplasmic. Transmembrane regions (helical) follow at residues 23-43 (VTFA…IFGY), 87-107 (AFTS…GPIT), 121-141 (ISFL…MLLL), 144-164 (IMLG…LSEM), 173-193 (LNIM…MVNY), 205-225 (LSLG…LLLP), 286-306 (LVMA…IILF), 322-342 (ALYS…ISIA), 351-371 (FLLI…AIIL), 384-404 (SFSV…GWSW), 430-450 (AVNL…LCAF), and 453-473 (GIFL…YIFL). Residues 474–522 (PETKGVPIEEMIFLWRKHWFWKKIVPGQPEVDDSRESMEMGEAVASRIK) lie on the Cytoplasmic side of the membrane.

This sequence belongs to the major facilitator superfamily. Sugar transporter (TC 2.A.1.1) family.

Its subcellular location is the membrane. The protein is Sugar carrier protein A (STA) of Ricinus communis (Castor bean).